A 264-amino-acid polypeptide reads, in one-letter code: Vacuolar protein sorting-associated protein 75 (264 aa).

The residue at position 3 (serine 3) is a Phosphoserine. Residues 223–264 (LEDEEGESGLSADGDSEDDDGSLGEVDLPLSDEEPSSKKRKV) are disordered.

It belongs to the nucleosome assembly protein (NAP) family. In terms of assembly, homodimer. Homotetramer. Forms a complex with RTT109; consisting of a VPS75 dimer contacted by two RTT109 subunits. Interacts with RTT109; the interaction is direct. Interacts with ASF1. Interacts with histone H3/H4 heterodimers and heterotetramers via histone H3.

The protein localises to the nucleus. Its function is as follows. Histone chaperone which acts as a cofactor stimulating histone H3 acetylation by RTT109. Preferentially stimulates histone H3 'Lys-9' acetylation by RTT109. May also stimulate histone H3 'Lys-56' acetylation by RTT109. Assembles nucleosomes (in vitro). This Saccharomyces cerevisiae (strain ATCC 204508 / S288c) (Baker's yeast) protein is Vacuolar protein sorting-associated protein 75 (VPS75).